The following is a 250-amino-acid chain: PTB-containing, cubilin and LRP1-interacting protein (250 aa).

The PID domain maps to valine 93–glycine 250. The disordered stretch occupies residues aspartate 229 to glycine 250. Phosphoserine is present on residues serine 236 and serine 247. Over residues valine 241–glycine 250 the composition is skewed to acidic residues.

In terms of assembly, found in a complex with PID1/PCLI1, LRP1 and CUBNI. Interacts with LRP1 and CUBN. As to expression, expressed in subcutaneous fat, heart, skeletal muscle, brain, colon, thymus, spleen, kidney, liver, small intestine, placenta, lung and peripheral blood leukocyte.

The protein resides in the cytoplasm. In terms of biological role, increases proliferation of preadipocytes without affecting adipocytic differentiation. This is PTB-containing, cubilin and LRP1-interacting protein (PID1) from Homo sapiens (Human).